Reading from the N-terminus, the 216-residue chain is Germin-like protein 1-1 (216 aa).

The first 24 residues, 1 to 24, serve as a signal peptide directing secretion; sequence MARVQLWVAAACAVVLALAAPSLA. C34 and C49 are oxidised to a cystine. 2 N-linked (GlcNAc...) asparagine glycosylation sites follow: N52 and N76. Residues 61-209 form the Cupin type-1 domain; sequence AGLKNPGNTN…AFRVDVPQVD (149 aa). The Mn(2+) site is built by H109, H111, E116, and H155.

The protein belongs to the germin family. As to quaternary structure, oligomer (believed to be a pentamer but probably hexamer).

The protein resides in the secreted. The protein localises to the extracellular space. It is found in the apoplast. In terms of biological role, may play a role in plant defense. Probably has no oxalate oxidase activity even if the active site is conserved. The protein is Germin-like protein 1-1 (GER4) of Oryza sativa subsp. japonica (Rice).